A 199-amino-acid polypeptide reads, in one-letter code: Imidazole glycerol phosphate synthase subunit HisH 2 (199 aa).

The Glutamine amidotransferase type-1 domain maps to M1 to C199. The active-site Nucleophile is C76. Active-site residues include H177 and E179.

Heterodimer of HisH and HisF.

It is found in the cytoplasm. It carries out the reaction 5-[(5-phospho-1-deoxy-D-ribulos-1-ylimino)methylamino]-1-(5-phospho-beta-D-ribosyl)imidazole-4-carboxamide + L-glutamine = D-erythro-1-(imidazol-4-yl)glycerol 3-phosphate + 5-amino-1-(5-phospho-beta-D-ribosyl)imidazole-4-carboxamide + L-glutamate + H(+). The catalysed reaction is L-glutamine + H2O = L-glutamate + NH4(+). It participates in amino-acid biosynthesis; L-histidine biosynthesis; L-histidine from 5-phospho-alpha-D-ribose 1-diphosphate: step 5/9. IGPS catalyzes the conversion of PRFAR and glutamine to IGP, AICAR and glutamate. The HisH subunit provides the glutamine amidotransferase activity that produces the ammonia necessary to HisF for the synthesis of IGP and AICAR. The sequence is that of Imidazole glycerol phosphate synthase subunit HisH 2 from Legionella pneumophila (strain Paris).